The primary structure comprises 571 residues: Urease subunit alpha (571 aa).

A Urease domain is found at 134–571 (GAIDTHIHFI…LPMAQRYFLF (438 aa)). Ni(2+)-binding residues include H139, H141, and K222. N6-carboxylysine is present on K222. H224 contacts substrate. Ni(2+) contacts are provided by H251 and H277. Catalysis depends on H325, which acts as the Proton donor. Residue D365 participates in Ni(2+) binding.

This sequence belongs to the metallo-dependent hydrolases superfamily. Urease alpha subunit family. As to quaternary structure, heterotrimer of UreA (gamma), UreB (beta) and UreC (alpha) subunits. Three heterotrimers associate to form the active enzyme. Ni cation is required as a cofactor. Carboxylation allows a single lysine to coordinate two nickel ions.

It localises to the cytoplasm. It carries out the reaction urea + 2 H2O + H(+) = hydrogencarbonate + 2 NH4(+). The protein operates within nitrogen metabolism; urea degradation; CO(2) and NH(3) from urea (urease route): step 1/1. The chain is Urease subunit alpha from Bordetella bronchiseptica (strain ATCC BAA-588 / NCTC 13252 / RB50) (Alcaligenes bronchisepticus).